A 636-amino-acid chain; its full sequence is Tumor protein p73 (636 aa).

The tract at residues 1–46 (MAQSTATSPDGGTTFEHLWSSLEPDSTYFDLPQSSRGNNEVVGGTD) is transactivation. T27 bears the Phosphothreonine; by PLK1 mark. Y28 carries the phosphotyrosine; by SRC and HCK modification. The interval 78-104 (RAASASPYTPEHAASVPTHSPYAQPSS) is disordered. Polar residues predominate over residues 94-104 (PTHSPYAQPSS). Y99 is modified (phosphotyrosine; by ABL1). A DNA-binding region spans residues 131 to 310 (FQQSSTAKSA…DRKADEDHYR (180 aa)). 4 residues coordinate Zn(2+): C194, H197, C258, and C262. The segment at 314 to 345 (ALNESSAKNGAASKRAFKQSPPAVPALGAGVK) is disordered. Residues 345 to 380 (KKRRHGDEDTYYLQVRGRENFEILMKLKESLELMEL) are interaction with HIPK2. Residues 345-386 (KKRRHGDEDTYYLQVRGRENFEILMKLKESLELMELVPQPLV) form an oligomerization region. Residues 483–487 (PPPPY) carry the PPxY motif motif. In terms of domain architecture, SAM spans 485–551 (PPYHADPSLV…WRGLQDLKQG (67 aa)). Residue K627 forms a Glycyl lysine isopeptide (Lys-Gly) (interchain with G-Cter in SUMO); in isoform Alpha linkage. K627 participates in a covalent cross-link: Glycyl lysine isopeptide (Lys-Gly) (interchain with G-Cter in SUMO2).

This sequence belongs to the p53 family. As to quaternary structure, found in a complex with p53/TP53 and CABLES1. The C-terminal oligomerization domain binds to the ABL1 tyrosine kinase SH3 domain. Interacts with HECW2. Isoform Beta interacts homotypically and with p53/TP53, whereas isoform Alpha does not. Isoform Gamma interacts homotypically and with all p73 isoforms. Isoform Delta interacts with isoform Gamma, isoform Alpha, and homotypically. Isoforms Alpha and Beta interact with HIPK2. Isoform Alpha interacts with RANBP9. Isoform Beta interacts with WWOX. Interacts (via SAM domain) with FBXO45 (via B30.2/SPRY domain). Interacts with YAP1 (phosphorylated form). Interacts with HCK (via SH3 domain); this inhibits TP73 activity and degradation. Interacts (via SAM domain) with NQO1; this interaction is NADH-dependent, stabilizes TP73 in response to oxidative stress and protects it from ubiquitin-independent degradation by the 20S proteasome. In terms of assembly, (Microbial infection) Interacts with Epstein-Barr virus protein EBNA6; this interaction inhibits TP73-mediated apoptotic pathway. Requires Zn(2+) as cofactor. In terms of processing, isoform alpha (but not isoform beta) is sumoylated on Lys-627, which potentiates proteasomal degradation but does not affect transcriptional activity. Phosphorylation by PLK1 and PLK3 inhibits the transcription regulator activity and pro-apoptotic function. Higher levels of phosphorylation seen in the brain from patients with Huntington disease. Post-translationally, polyubiquitinated by RCHY1/PIRH2; leading to its degradation by the proteasome. As to expression, expressed in striatal neurons of patients with Huntington disease (at protein level). Brain, kidney, placenta, colon, heart, liver, spleen, skeletal muscle, prostate, thymus and pancreas. Highly expressed in fetal tissue. Expressed in the respiratory epithelium.

It localises to the nucleus. The protein localises to the cytoplasm. In terms of biological role, participates in the apoptotic response to DNA damage. Isoforms containing the transactivation domain are pro-apoptotic, isoforms lacking the domain are anti-apoptotic and block the function of p53 and transactivating p73 isoforms. May be a tumor suppressor protein. Is an activator of FOXJ1 expression. It is an essential factor for the positive regulation of lung ciliated cell differentiation. This is Tumor protein p73 (TP73) from Homo sapiens (Human).